Here is a 184-residue protein sequence, read N- to C-terminus: GTP cyclohydrolase 1 (184 aa).

Residues Cys-75, His-78, and Cys-146 each contribute to the Zn(2+) site.

It belongs to the GTP cyclohydrolase I family. Homomer.

The catalysed reaction is GTP + H2O = 7,8-dihydroneopterin 3'-triphosphate + formate + H(+). It functions in the pathway cofactor biosynthesis; 7,8-dihydroneopterin triphosphate biosynthesis; 7,8-dihydroneopterin triphosphate from GTP: step 1/1. The chain is GTP cyclohydrolase 1 from Finegoldia magna (strain ATCC 29328 / DSM 20472 / WAL 2508) (Peptostreptococcus magnus).